Consider the following 357-residue polypeptide: tRNA-specific 2-thiouridylase MnmA (357 aa).

ATP contacts are provided by residues 8–15 (GISGGVDS) and Ile34. The active-site Nucleophile is the Cys96. A disulfide bridge connects residues Cys96 and Cys192. Gly120 is a binding site for ATP. An interaction with tRNA region spans residues 142–144 (KDQ). Catalysis depends on Cys192, which acts as the Cysteine persulfide intermediate. Residues 301-302 (RY) form an interaction with tRNA region.

The protein belongs to the MnmA/TRMU family.

The protein localises to the cytoplasm. It carries out the reaction S-sulfanyl-L-cysteinyl-[protein] + uridine(34) in tRNA + AH2 + ATP = 2-thiouridine(34) in tRNA + L-cysteinyl-[protein] + A + AMP + diphosphate + H(+). Catalyzes the 2-thiolation of uridine at the wobble position (U34) of tRNA, leading to the formation of s(2)U34. The polypeptide is tRNA-specific 2-thiouridylase MnmA (Chlorobium phaeobacteroides (strain DSM 266 / SMG 266 / 2430)).